Consider the following 334-residue polypeptide: Retinol dehydrogenase 14 (334 aa).

51–57 is an NADP(+) binding site; sequence GANSGLG. S190 contributes to the substrate binding site. Y215 (proton acceptor) is an active-site residue.

Belongs to the short-chain dehydrogenases/reductases (SDR) family.

It catalyses the reaction all-trans-retinol + NADP(+) = all-trans-retinal + NADPH + H(+). It carries out the reaction 11-cis-retinol + NADP(+) = 11-cis-retinal + NADPH + H(+). The catalysed reaction is 9-cis-retinol + NADP(+) = 9-cis-retinal + NADPH + H(+). Retinol dehydrogenase with a clear preference for NADP. Displays high activity towards 9-cis, 11-cis and all-trans-retinol. Shows a very weak activity towards 13-cis-retinol. Has no activity towards steroids. In Mus musculus (Mouse), this protein is Retinol dehydrogenase 14 (Rdh14).